Reading from the N-terminus, the 206-residue chain is Small ribosomal subunit protein uS4 (206 aa).

One can recognise an S4 RNA-binding domain in the interval 96-156; that stretch reads QRLDNVVYRM…EKSKTQARII (61 aa).

Belongs to the universal ribosomal protein uS4 family. As to quaternary structure, part of the 30S ribosomal subunit. Contacts protein S5. The interaction surface between S4 and S5 is involved in control of translational fidelity.

In terms of biological role, one of the primary rRNA binding proteins, it binds directly to 16S rRNA where it nucleates assembly of the body of the 30S subunit. Functionally, with S5 and S12 plays an important role in translational accuracy. The chain is Small ribosomal subunit protein uS4 from Pseudoalteromonas translucida (strain TAC 125).